The primary structure comprises 338 residues: Solute carrier family 35 member G5 (338 aa).

Positions 1–28 (MAGSHPYFNLPDSTHPSPPSGPPSLRWH) are disordered. The next 9 helical transmembrane spans lie at 37–57 (TNGL…VGPL), 67–87 (LPSL…ALLL), 105–125 (CFCA…VQVV), 160–180 (CGLL…LWTL), 190–210 (ALGY…LLVY), 221–241 (TVAF…LFVL), 250–270 (LLSW…FTCV), 281–301 (LVCA…YYML), and 310–330 (IMGA…NLSC). The region spanning 49-174 (LPAGFVGPLS…SILGLIIIVG (126 aa)) is the EamA 1 domain. Positions 272 to 325 (YAVTKAHPALVCAVLHSEVVVALILQYYMLPETVAPSDIMGAGVVLGNITIIPA) constitute an EamA 2 domain.

This sequence belongs to the SLC35G solute transporter family.

Its subcellular location is the membrane. This is Solute carrier family 35 member G5 (SLC35G5) from Gorilla gorilla gorilla (Western lowland gorilla).